Reading from the N-terminus, the 30-residue chain is Babycurus-toxin 1 (30 aa).

The 29-residue stretch at 2 to 30 (KDGYPTNSKGCKISGCLPGENKFCLNECQ) folds into the LCN-type CS-alpha/beta domain.

It belongs to the long (4 C-C) scorpion toxin superfamily. Sodium channel inhibitor family. As to expression, expressed by the venom gland.

The protein resides in the secreted. Its function is as follows. Binds to sodium channels (Nav) and inhibits both the activation and inactivation of the activated channels, thereby blocking neuronal transmission. This is Babycurus-toxin 1 from Babycurus centrurimorphus (East African scorpion).